Consider the following 490-residue polypeptide: Dual specificity protein kinase CLK3 (490 aa).

The disordered stretch occupies residues 1 to 138 (MHHCKRYRSP…SKRSSRSVED (138 aa)). Residue Tyr7 is modified to Phosphotyrosine. 6 positions are modified to phosphoserine: Ser9, Ser49, Ser51, Ser67, Ser76, and Ser78. Basic and acidic residues-rich tracts occupy residues 26 to 56 (YSRE…DRIP) and 63 to 76 (EHRD…EERS). A compositionally biased stretch (basic residues) spans 88–116 (RSRHRRRSRERAPYRTRKHAHHCHKRRTR). Residues 117-130 (SCSSASSRSQQSSK) are compositionally biased toward low complexity. At Ser135 the chain carries Phosphoserine. Residues 156-472 (YEIVGNLGEG…LAEALLHPFF (317 aa)) form the Protein kinase domain. Residues 162-170 (LGEGTFGKV) and Lys186 contribute to the ATP site. The active-site Proton acceptor is the Asp283.

Belongs to the protein kinase superfamily. CMGC Ser/Thr protein kinase family. Lammer subfamily. Autophosphorylates on all three types of residues. Present at high levels in testis and ovary. In testis, expression is restricted to elongated, maturing spermatozoa. Also present in spleen, brain, lung and liver (at protein level).

The protein localises to the nucleus. Its subcellular location is the cytoplasm. It localises to the cytoplasmic vesicle. The protein resides in the secretory vesicle. It is found in the acrosome. It carries out the reaction L-seryl-[protein] + ATP = O-phospho-L-seryl-[protein] + ADP + H(+). The catalysed reaction is L-threonyl-[protein] + ATP = O-phospho-L-threonyl-[protein] + ADP + H(+). The enzyme catalyses L-tyrosyl-[protein] + ATP = O-phospho-L-tyrosyl-[protein] + ADP + H(+). Leucettine L41 inhibits its kinase activity and affects the regulation of alternative splicing mediated by phosphorylation of SR proteins. Dual specificity kinase acting on both serine/threonine and tyrosine-containing substrates. Phosphorylates serine- and arginine-rich (SR) proteins of the spliceosomal complex. May be a constituent of a network of regulatory mechanisms that enable SR proteins to control RNA splicing and can cause redistribution of SR proteins from speckles to a diffuse nucleoplasmic distribution. Phosphorylates SRSF1 and SRSF3. Regulates the alternative splicing of tissue factor (F3) pre-mRNA in endothelial cells. The sequence is that of Dual specificity protein kinase CLK3 from Mus musculus (Mouse).